Reading from the N-terminus, the 225-residue chain is Probable polyketide biosynthesis zinc-dependent hydrolase PksB (225 aa).

His-62, His-64, Asp-66, His-67, His-123, Asp-140, and His-181 together coordinate Zn(2+).

It belongs to the metallo-beta-lactamase superfamily. Zn(2+) is required as a cofactor.

Its subcellular location is the cytoplasm. It functions in the pathway antibiotic biosynthesis; bacillaene biosynthesis. Its function is as follows. Probably involved in some intermediate steps for the synthesis of the antibiotic polyketide bacillaene which is involved in secondary metabolism. In Bacillus subtilis (strain 168), this protein is Probable polyketide biosynthesis zinc-dependent hydrolase PksB (pksB).